Consider the following 179-residue polypeptide: UPF0302 protein BLi02393/BL02764 (179 aa).

The protein belongs to the UPF0302 family.

This Bacillus licheniformis (strain ATCC 14580 / DSM 13 / JCM 2505 / CCUG 7422 / NBRC 12200 / NCIMB 9375 / NCTC 10341 / NRRL NRS-1264 / Gibson 46) protein is UPF0302 protein BLi02393/BL02764.